Reading from the N-terminus, the 305-residue chain is MIKQRTLKRIVQATGVGLHTGKKVTLTLRPAPANTGVIYRRTDLNPPVDFPADAKSVRDTMLCTCLVNEHDVRISTVEHLNAALAGLGIDNIIVEVDAPEIPIMDGSAAPFVYLLLDAGINELNCAKKFVRIKETVRVEDGDKWAEFKPYNGFSLDFTIDFNHPAIDASTQRYTLNFSADAFMRQISRARTFGFMRDIEYLQSRGLCLGGSFDCAIVVDDYRVLNEDGLRFEDEFVRHKMLDAIGDLFMCGHNIIGAFTAYKSGHALNNKLLQAVLAKQEAWEYVTFEDDAKLPMAFRAPSMVLA.

The Zn(2+) site is built by His-79, His-238, and Asp-242. His-265 serves as the catalytic Proton donor.

This sequence belongs to the LpxC family. Zn(2+) is required as a cofactor.

The catalysed reaction is a UDP-3-O-[(3R)-3-hydroxyacyl]-N-acetyl-alpha-D-glucosamine + H2O = a UDP-3-O-[(3R)-3-hydroxyacyl]-alpha-D-glucosamine + acetate. The protein operates within glycolipid biosynthesis; lipid IV(A) biosynthesis; lipid IV(A) from (3R)-3-hydroxytetradecanoyl-[acyl-carrier-protein] and UDP-N-acetyl-alpha-D-glucosamine: step 2/6. In terms of biological role, catalyzes the hydrolysis of UDP-3-O-myristoyl-N-acetylglucosamine to form UDP-3-O-myristoylglucosamine and acetate, the committed step in lipid A biosynthesis. This Klebsiella pneumoniae (strain 342) protein is UDP-3-O-acyl-N-acetylglucosamine deacetylase.